The following is a 267-amino-acid chain: Ribosomal RNA small subunit methyltransferase J (267 aa).

Residues 133 to 134 and Asp-187 each bind S-adenosyl-L-methionine; that span reads ER.

This sequence belongs to the methyltransferase superfamily. RsmJ family.

It localises to the cytoplasm. The catalysed reaction is guanosine(1516) in 16S rRNA + S-adenosyl-L-methionine = N(2)-methylguanosine(1516) in 16S rRNA + S-adenosyl-L-homocysteine + H(+). Functionally, specifically methylates the guanosine in position 1516 of 16S rRNA. This is Ribosomal RNA small subunit methyltransferase J from Halorhodospira halophila (strain DSM 244 / SL1) (Ectothiorhodospira halophila (strain DSM 244 / SL1)).